We begin with the raw amino-acid sequence, 205 residues long: Methylthioribulose-1-phosphate dehydratase (205 aa).

2 residues coordinate Zn(2+): His-94 and His-96.

It belongs to the aldolase class II family. MtnB subfamily. Requires Zn(2+) as cofactor.

The enzyme catalyses 5-(methylsulfanyl)-D-ribulose 1-phosphate = 5-methylsulfanyl-2,3-dioxopentyl phosphate + H2O. It participates in amino-acid biosynthesis; L-methionine biosynthesis via salvage pathway; L-methionine from S-methyl-5-thio-alpha-D-ribose 1-phosphate: step 2/6. In terms of biological role, catalyzes the dehydration of methylthioribulose-1-phosphate (MTRu-1-P) into 2,3-diketo-5-methylthiopentyl-1-phosphate (DK-MTP-1-P). The chain is Methylthioribulose-1-phosphate dehydratase from Pectobacterium atrosepticum (strain SCRI 1043 / ATCC BAA-672) (Erwinia carotovora subsp. atroseptica).